Consider the following 299-residue polypeptide: Inosose dehydratase (299 aa).

It belongs to the IolE/MocC family. Glutathione serves as cofactor. It depends on Co(2+) as a cofactor. Requires Mn(2+) as cofactor.

It carries out the reaction scyllo-inosose = 3D-3,5/4-trihydroxycyclohexane-1,2-dione + H2O. In terms of biological role, catalyzes the dehydration of inosose (2-keto-myo-inositol, 2KMI or 2,4,6/3,5-pentahydroxycyclohexanone) to 3D-(3,5/4)-trihydroxycyclohexane-1,2-dione (D-2,3-diketo-4-deoxy-epi-inositol). The sequence is that of Inosose dehydratase from Klebsiella pneumoniae subsp. pneumoniae (strain ATCC 700721 / MGH 78578).